The following is a 3174-amino-acid chain: Probable polyketide synthase 15 (3174 aa).

In terms of domain architecture, Ketosynthase family 3 (KS3) spans 23 to 474 (NDEIAIVGIG…GSNCCLILSQ (452 aa)). Active-site for beta-ketoacyl synthase activity residues include C194, H342, and H397. 2 coiled-coil regions span residues 472–509 (LSQF…QYDN) and 574–604 (EFNK…RVQT). A compositionally biased stretch (basic and acidic residues) spans 578–599 (QKQSQKEKEKEKEREGEEKEQL). The segment at 578–601 (QKQSQKEKEKEKEREGEEKEQLNR) is disordered. Residues 707–740 (GIEASFIVGHSLGEIPAAYCSGMITLDTLCYLIY) form an acyl/malonyl transferase region. S717 functions as the For acyl/malonyl transferase activity in the catalytic mechanism. The N-terminal hotdog fold stretch occupies residues 1034 to 1156 (IDILGLSNYD…ANFQLLNNNN (123 aa)). Residues 1034–1332 (IDILGLSNYD…CKSLKIVKNP (299 aa)) enclose the PKS/mFAS DH domain. H1068 acts as the Proton acceptor; for dehydratase activity in catalysis. Positions 1182–1332 (NKTKISRIDL…CKSLKIVKNP (151 aa)) are C-terminal hotdog fold. D1241 functions as the Proton donor; for dehydratase activity in the catalytic mechanism. Residues 1758 to 1793 (LEININNNNNNNNNNNNNNNNNNNNNNNNNNYEDNV) are a coiled coil. A Carrier domain is found at 2653 to 2730 (VDSLNIKDIF…LVIKIIITAI (78 aa)). S2690 bears the O-(pantetheine 4'-phosphoryl)serine mark.

Pantetheine 4'-phosphate serves as cofactor.

Probable polyketide synthase. This Dictyostelium discoideum (Social amoeba) protein is Probable polyketide synthase 15 (pks15).